Reading from the N-terminus, the 171-residue chain is Peptide deformylase (171 aa).

Residues cysteine 87 and histidine 129 each coordinate Fe cation. Glutamate 130 is a catalytic residue. A Fe cation-binding site is contributed by histidine 133.

The protein belongs to the polypeptide deformylase family. Fe(2+) serves as cofactor.

It catalyses the reaction N-terminal N-formyl-L-methionyl-[peptide] + H2O = N-terminal L-methionyl-[peptide] + formate. Its function is as follows. Removes the formyl group from the N-terminal Met of newly synthesized proteins. Requires at least a dipeptide for an efficient rate of reaction. N-terminal L-methionine is a prerequisite for activity but the enzyme has broad specificity at other positions. The protein is Peptide deformylase of Pseudothermotoga lettingae (strain ATCC BAA-301 / DSM 14385 / NBRC 107922 / TMO) (Thermotoga lettingae).